A 101-amino-acid chain; its full sequence is Small ribosomal subunit protein uS14 (101 aa).

This sequence belongs to the universal ribosomal protein uS14 family. Part of the 30S ribosomal subunit. Contacts proteins S3 and S10.

In terms of biological role, binds 16S rRNA, required for the assembly of 30S particles and may also be responsible for determining the conformation of the 16S rRNA at the A site. The polypeptide is Small ribosomal subunit protein uS14 (Paenarthrobacter aurescens (strain TC1)).